A 226-amino-acid polypeptide reads, in one-letter code: ATP synthase F(0) complex subunit a (226 aa).

The next 6 membrane-spanning stretches (helical) occupy residues 12 to 32, 68 to 88, 97 to 117, 138 to 158, 164 to 184, and 189 to 209; these read PTMMGLPIVILIVLFPSILFP, WALMLISLILFIGSTNLLGLL, QLSMNLGMAIPLWAGTVITGF, IPMLVIIETISLFIQPMALAV, ITAGHLLIHLIGGATLALMDI, and AFITFIVLILLTILEFAVALI.

This sequence belongs to the ATPase A chain family. As to quaternary structure, component of the ATP synthase complex composed at least of ATP5F1A/subunit alpha, ATP5F1B/subunit beta, ATP5MC1/subunit c (homooctomer), MT-ATP6/subunit a, MT-ATP8/subunit 8, ATP5ME/subunit e, ATP5MF/subunit f, ATP5MG/subunit g, ATP5MK/subunit k, ATP5MJ/subunit j, ATP5F1C/subunit gamma, ATP5F1D/subunit delta, ATP5F1E/subunit epsilon, ATP5PF/subunit F6, ATP5PB/subunit b, ATP5PD/subunit d, ATP5PO/subunit OSCP. ATP synthase complex consists of a soluble F(1) head domain (subunits alpha(3) and beta(3)) - the catalytic core - and a membrane F(0) domain - the membrane proton channel (subunits c, a, 8, e, f, g, k and j). These two domains are linked by a central stalk (subunits gamma, delta, and epsilon) rotating inside the F1 region and a stationary peripheral stalk (subunits F6, b, d, and OSCP). Interacts with DNAJC30; interaction is direct.

It is found in the mitochondrion inner membrane. It carries out the reaction H(+)(in) = H(+)(out). In terms of biological role, subunit a, of the mitochondrial membrane ATP synthase complex (F(1)F(0) ATP synthase or Complex V) that produces ATP from ADP in the presence of a proton gradient across the membrane which is generated by electron transport complexes of the respiratory chain. ATP synthase complex consist of a soluble F(1) head domain - the catalytic core - and a membrane F(1) domain - the membrane proton channel. These two domains are linked by a central stalk rotating inside the F(1) region and a stationary peripheral stalk. During catalysis, ATP synthesis in the catalytic domain of F(1) is coupled via a rotary mechanism of the central stalk subunits to proton translocation. With the subunit c (ATP5MC1), forms the proton-conducting channel in the F(0) domain, that contains two crucial half-channels (inlet and outlet) that facilitate proton movement from the mitochondrial intermembrane space (IMS) into the matrix. Protons are taken up via the inlet half-channel and released through the outlet half-channel, following a Grotthuss mechanism. This Halichoerus grypus (Gray seal) protein is ATP synthase F(0) complex subunit a.